Here is a 261-residue protein sequence, read N- to C-terminus: Caveolae-associated protein 3 (261 aa).

An interaction with CAVIN1 region spans residues 1 to 84; the sequence is MRESALERGP…SNTLAQLLAK (84 aa). The tract at residues 20–78 is leucine-zipper; it reads VHAVTVVTLLEKLASMLETLRERQGGLARRQGGLAGSVRRIQSGLGALSRSHDTTSNTL. 2 positions are modified to phosphoserine: Ser62 and Ser70. Lys128 is covalently cross-linked (Glycyl lysine isopeptide (Lys-Gly) (interchain with G-Cter in SUMO2)). The segment at 135 to 203 is interaction with CAV1; it reads ASAFQKAPEP…SGRKGPAAPP (69 aa). The segment at 139 to 261 is disordered; that stretch reads QKAPEPLGPA…EALLQMESVA (123 aa). Positions 158–170 are enriched in acidic residues; sequence LEAEVGESSDEEP. 3 positions are modified to phosphoserine: Ser165, Ser166, and Ser173. A compositionally biased stretch (pro residues) spans 200-212; the sequence is AAPPPTPVKPPRL. A compositionally biased stretch (low complexity) spans 213–231; sequence GPGRSAEAQPEAQPALEPT.

It belongs to the CAVIN family. As to quaternary structure, component of the CAVIN complex composed of CAVIN1, CAVIN2, CAVIN3 and CAVIN4. Interacts with PRKCD and with phosphatidylserine. Phosphatidylserine may form a bridge between PKC and PKC-binding partners and stabilize the binding. Interacts with PER2. Interacts with CAVIN1. Interacts (via leucine-zipper domain) with CAV1 in a cholesterol-sensitive manner. Interacts with EPS15L1. In vitro, phosphorylated by PRKCD. Skeletal muscle, liver, stomach, lung, kidney and heart (at protein level). Strongly expressed in mammary and epithelial cells.

It localises to the cytoplasm. Its subcellular location is the membrane. The protein resides in the caveola. It is found in the cytosol. Regulates the traffic and/or budding of caveolae. Plays a role in caveola formation in a tissue-specific manner. Required for the formation of caveolae in smooth muscle but not in the lung and heart endothelial cells. Regulates the equilibrium between cell surface-associated and cell surface-dissociated caveolae by promoting the rapid release of caveolae from the cell surface. Plays a role in the regulation of the circadian clock. Modulates the period length and phase of circadian gene expression and also regulates expression and interaction of the core clock components PER1/2 and CRY1/2. The chain is Caveolae-associated protein 3 from Homo sapiens (Human).